The following is a 128-amino-acid chain: UPF0102 protein PSPTO_4420 (128 aa).

Belongs to the UPF0102 family.

The protein is UPF0102 protein PSPTO_4420 of Pseudomonas syringae pv. tomato (strain ATCC BAA-871 / DC3000).